A 178-amino-acid polypeptide reads, in one-letter code: MAEPITLARPYAKAAFEAARDASALQSWSDALVEAAAITRDSKVKALLSSPSLTAVQKAAAFIDLCGDTLNEAQKNFIRVLADNNRLPLFPQVSQLFELYKANQEKAVDVELQTAYDIDDAVLAKLATSLTEKLDRKVSLQTAIDPSLLGGAIIRAGDTVIDGSVRGRLAKLAETMSH.

It belongs to the ATPase delta chain family. In terms of assembly, F-type ATPases have 2 components, F(1) - the catalytic core - and F(0) - the membrane proton channel. F(1) has five subunits: alpha(3), beta(3), gamma(1), delta(1), epsilon(1). F(0) has three main subunits: a(1), b(2) and c(10-14). The alpha and beta chains form an alternating ring which encloses part of the gamma chain. F(1) is attached to F(0) by a central stalk formed by the gamma and epsilon chains, while a peripheral stalk is formed by the delta and b chains.

Its subcellular location is the cell inner membrane. Functionally, f(1)F(0) ATP synthase produces ATP from ADP in the presence of a proton or sodium gradient. F-type ATPases consist of two structural domains, F(1) containing the extramembraneous catalytic core and F(0) containing the membrane proton channel, linked together by a central stalk and a peripheral stalk. During catalysis, ATP synthesis in the catalytic domain of F(1) is coupled via a rotary mechanism of the central stalk subunits to proton translocation. In terms of biological role, this protein is part of the stalk that links CF(0) to CF(1). It either transmits conformational changes from CF(0) to CF(1) or is implicated in proton conduction. The chain is ATP synthase subunit delta from Teredinibacter turnerae (strain ATCC 39867 / T7901).